The chain runs to 276 residues: MSLVIAVYGKGGIGKSTTSANISAALALKGAKVLQIGCDPKHDSTFPITGKLQKTVIEALEEVDFHHEELSPEDVIESGFAGIDGLEAGGPPAGSGCGGYVVGESVTLLQEMGLYDKYDVILFDVLGDVVCGGFSAPLNYADYAIIIATNDFDSIFAANRLCMAIQQKSVRYKVKLAGIVANRVDYTTGGGTNMLDQFAEKVGTRLLAKVPYHEMIRKSRFAGKTLFAMEEAQTEFPECLAPYNEIADALMQEHPIASVPVPIGDRELFKLVNGWQ.

Residues 12–17 (GIGKST) and lysine 41 each bind ATP. Position 16 (serine 16) interacts with Mg(2+). The [4Fe-4S] cluster site is built by cysteine 97 and cysteine 131. ATP is bound at residue 182–183 (NR).

It belongs to the NifH/BchL/ChlL family. Homodimer. Protochlorophyllide reductase is composed of three subunits; BchL, BchN and BchB. The cofactor is [4Fe-4S] cluster.

It catalyses the reaction chlorophyllide a + oxidized 2[4Fe-4S]-[ferredoxin] + 2 ADP + 2 phosphate = protochlorophyllide a + reduced 2[4Fe-4S]-[ferredoxin] + 2 ATP + 2 H2O. Its pathway is porphyrin-containing compound metabolism; bacteriochlorophyll biosynthesis (light-independent). Its function is as follows. Component of the dark-operative protochlorophyllide reductase (DPOR) that uses Mg-ATP and reduced ferredoxin to reduce ring D of protochlorophyllide (Pchlide) to form chlorophyllide a (Chlide). This reaction is light-independent. The L component serves as a unique electron donor to the NB-component of the complex, and binds Mg-ATP. In Chlorobium chlorochromatii (strain CaD3), this protein is Light-independent protochlorophyllide reductase iron-sulfur ATP-binding protein.